The sequence spans 340 residues: Nitrilase (340 aa).

The CN hydrolase domain maps to 7-273 (IRAAAVQIAP…EGMVVADLDM (267 aa)). E47 (proton acceptor) is an active-site residue. K129 is an active-site residue. The active-site Nucleophile is the C163.

Belongs to the carbon-nitrogen hydrolase superfamily. Nitrilase family. In terms of assembly, forms oligomers.

It carries out the reaction a nitrile + 2 H2O = a carboxylate + NH4(+). The catalysed reaction is phenylpropanonitrile + 2 H2O = 3-phenylpropanoate + NH4(+). It catalyses the reaction an aliphatic nitrile + 2 H2O = a carboxylate + NH4(+). Its activity is regulated as follows. Highly resistant to various miscible cosolvents and tolerates high substrate concentrations. Functionally, catalyzes the hydrolysis of a broad range of nitriles to yield their corresponding carboxylic acid and ammonia. In vitro, shows high activity toward benzylic/unsaturated nitriles. The preferred substrate is trans-cinnamonitrile, followed by mono/di-cyanopyridines and aromatic substituted nitriles, with a moderate activity toward 3-phenylpropionitrile. Shows weaker activity toward the common dinitrile fumaronitrile. Also shows weak activity toward some aliphatic nitriles, including adiponitrile and glutaronitrile, and the arylacetonitrile 2-thiopheneacetonitrile. The sequence is that of Nitrilase from Paraburkholderia phymatum (strain DSM 17167 / CIP 108236 / LMG 21445 / STM815) (Burkholderia phymatum).